A 476-amino-acid polypeptide reads, in one-letter code: Aspartyl/glutamyl-tRNA(Asn/Gln) amidotransferase subunit B (476 aa).

The protein belongs to the GatB/GatE family. GatB subfamily. As to quaternary structure, heterotrimer of A, B and C subunits.

The enzyme catalyses L-glutamyl-tRNA(Gln) + L-glutamine + ATP + H2O = L-glutaminyl-tRNA(Gln) + L-glutamate + ADP + phosphate + H(+). The catalysed reaction is L-aspartyl-tRNA(Asn) + L-glutamine + ATP + H2O = L-asparaginyl-tRNA(Asn) + L-glutamate + ADP + phosphate + 2 H(+). Allows the formation of correctly charged Asn-tRNA(Asn) or Gln-tRNA(Gln) through the transamidation of misacylated Asp-tRNA(Asn) or Glu-tRNA(Gln) in organisms which lack either or both of asparaginyl-tRNA or glutaminyl-tRNA synthetases. The reaction takes place in the presence of glutamine and ATP through an activated phospho-Asp-tRNA(Asn) or phospho-Glu-tRNA(Gln). The protein is Aspartyl/glutamyl-tRNA(Asn/Gln) amidotransferase subunit B of Clostridium botulinum (strain 657 / Type Ba4).